A 244-amino-acid polypeptide reads, in one-letter code: Lymphotoxin-beta (244 aa).

Topologically, residues 1 to 18 (MGALGLEGRGGRLQGRGS) are cytoplasmic. A helical; Signal-anchor for type II membrane protein transmembrane segment spans residues 19–48 (LLLAVAGATSLVTLLLAVPITVLAVLALVP). The Extracellular portion of the chain corresponds to 49–244 (QDQGGLVTDT…KTFFGAVMVG (196 aa)). The region spanning 88-243 (PAAHLIGAPL…GKTFFGAVMV (156 aa)) is the THD domain. The N-linked (GlcNAc...) asparagine glycan is linked to Asn-222.

It belongs to the tumor necrosis factor family. In terms of assembly, heterotrimer of either two LTB and one LTA subunits or (less prevalent) two LTA and one LTB subunits.

The protein resides in the membrane. Functionally, cytokine that binds to LTBR/TNFRSF3. May play a specific role in immune response regulation. Provides the membrane anchor for the attachment of the heterotrimeric complex to the cell surface. The chain is Lymphotoxin-beta (LTB) from Macaca mulatta (Rhesus macaque).